Consider the following 330-residue polypeptide: Free fatty acid receptor 2 (330 aa).

The Extracellular portion of the chain corresponds to 1–8; that stretch reads MTPDWHSS. Residues 9-29 traverse the membrane as a helical segment; it reads LILTAYILIFLTGLPANLLAL. At 30-43 the chain is on the cytoplasmic side; sequence RAFMGRVRQPQPAP. Residues 44–64 traverse the membrane as a helical segment; that stretch reads VHILLLNLTLADLLLLLLLPF. The Extracellular segment spans residues 65–79; that stretch reads RIVEAASNFRWYLPK. Residues 80 to 100 traverse the membrane as a helical segment; the sequence is IVCALTGFGFYSSIYCSTWLL. Residues 101 to 126 lie on the Cytoplasmic side of the membrane; that stretch reads AGISMERYLGVAFPVQYKLSRRPLYG. The chain crosses the membrane as a helical span at residues 127 to 147; the sequence is VIAALVAWIMSFGHCTIVIIV. Topologically, residues 148 to 184 are extracellular; it reads QYLNSTEQVGTENQITCYENFTQEQLDVVLPVRLELC. Residues N151 and N167 are each glycosylated (N-linked (GlcNAc...) asparagine). Residues 185-205 traverse the membrane as a helical segment; it reads LVLFFVPMAVTIFCYWRFVWI. At 206-219 the chain is on the cytoplasmic side; sequence MLTQPHVGAQRRRR. Residues 220-240 form a helical membrane-spanning segment; the sequence is AVGLAVVTLLNFLVCFGPYNM. Residues 241–255 lie on the Extracellular side of the membrane; the sequence is SHLVGFYLRQSPSWR. Residues 256-276 traverse the membrane as a helical segment; sequence VEAVVFSSLNASLDPLLFYFS. The Cytoplasmic portion of the chain corresponds to 277–330; sequence SSVVRRAFGKGLLLIRNPASSMLGRGAKETVEGTKMDRGGSQAEGVQSSEFVTE. Residues 306-330 form a disordered region; sequence TVEGTKMDRGGSQAEGVQSSEFVTE. Positions 320–330 are enriched in polar residues; it reads EGVQSSEFVTE.

It belongs to the G-protein coupled receptor 1 family. As to quaternary structure, interacts with FCN1 (via Fibrinogen C-terminal domain). Highly expressed in hematopoietic tissues, such as spleen and bone marrow, with highest levels in a subset of immune cells, including monocytes or neutrophils. Expressed in adipose tissues with high expression in differentiating adipocytes. Expressed by intestinal endocrine cells.

It is found in the cell membrane. Functionally, g protein-coupled receptor that is activated by a major product of dietary fiber digestion, the short chain fatty acids (SCFAs), and that plays a role in the regulation of whole-body energy homeostasis and in intestinal immunity. In omnivorous mammals, the short chain fatty acids acetate, propionate and butyrate are produced primarily by the gut microbiome that metabolizes dietary fibers. SCFAs serve as a source of energy but also act as signaling molecules. That G protein-coupled receptor is probably coupled to the pertussis toxin-sensitive, G(i/o)-alpha family of G proteins but also to the Gq family. Its activation results in the formation of inositol 1,4,5-trisphosphate, the mobilization of intracellular calcium, the phosphorylation of the MAPK3/ERK1 and MAPK1/ERK2 kinases and the inhibition of intracellular cAMP accumulation. May play a role in glucose homeostasis by regulating the secretion of GLP-1, in response to short-chain fatty acids accumulating in the intestine. May also regulate the production of LEP/Leptin, a hormone acting on the central nervous system to inhibit food intake. Finally, may also regulate whole-body energy homeostasis through adipogenesis regulating both differentiation and lipid storage of adipocytes. In parallel to its role in energy homeostasis, may also mediate the activation of the inflammatory and immune responses by SCFA in the intestine, regulating the rapid production of chemokines and cytokines. May also play a role in the resolution of the inflammatory response and control chemotaxis in neutrophils. In addition to SCFAs, may also be activated by the extracellular lectin FCN1 in a process leading to activation of monocytes and inducing the secretion of interleukin-8/IL-8 in response to the presence of microbes. The sequence is that of Free fatty acid receptor 2 (Ffar2) from Mus musculus (Mouse).